Reading from the N-terminus, the 111-residue chain is uncharacterized protein (111 aa).

The protein belongs to the asfivirus E111R family.

This is an uncharacterized protein from African swine fever virus (strain Badajoz 1971 Vero-adapted) (Ba71V).